We begin with the raw amino-acid sequence, 710 residues long: Dynein axonemal assembly factor 3 homolog (710 aa).

Residues 403–487 form a disordered region; sequence GAEAGAGAGP…DSDPAAAAST (85 aa). Positions 404–416 are enriched in gly residues; it reads AEAGAGAGPGGEA. Residues 417 to 438 show a composition bias toward low complexity; the sequence is AAGASSSSGKEEAAAAAAAGKE. Residues 453–462 show a composition bias toward gly residues; it reads SGSGAPGAGT. Residues 478 to 487 are compositionally biased toward low complexity; it reads DSDPAAAAST.

Belongs to the DNAAF3 family.

Its subcellular location is the cytoplasm. Its function is as follows. Required for the assembly of axonemal inner and outer dynein arms. Involved in preassembly of dyneins into complexes before their transport into cilia. The sequence is that of Dynein axonemal assembly factor 3 homolog (DAB1) from Chlamydomonas reinhardtii (Chlamydomonas smithii).